A 418-amino-acid polypeptide reads, in one-letter code: Glutamyl-tRNA reductase (418 aa).

Residues 49–52 (TCNR), S109, 114–116 (EPQ), and Q120 contribute to the substrate site. C50 functions as the Nucleophile in the catalytic mechanism. An NADP(+)-binding site is contributed by 189 to 194 (GAGETI).

This sequence belongs to the glutamyl-tRNA reductase family. As to quaternary structure, homodimer.

The catalysed reaction is (S)-4-amino-5-oxopentanoate + tRNA(Glu) + NADP(+) = L-glutamyl-tRNA(Glu) + NADPH + H(+). It functions in the pathway porphyrin-containing compound metabolism; protoporphyrin-IX biosynthesis; 5-aminolevulinate from L-glutamyl-tRNA(Glu): step 1/2. Catalyzes the NADPH-dependent reduction of glutamyl-tRNA(Glu) to glutamate 1-semialdehyde (GSA). The polypeptide is Glutamyl-tRNA reductase (Citrobacter koseri (strain ATCC BAA-895 / CDC 4225-83 / SGSC4696)).